We begin with the raw amino-acid sequence, 339 residues long: Glycerol-3-phosphate dehydrogenase [NAD(P)+] (339 aa).

The NADPH site is built by S15, Y16, H36, and K110. Residues K110, G139, and T141 each contribute to the sn-glycerol 3-phosphate site. NADPH is bound at residue A143. Residues K195, D248, S258, R259, and N260 each coordinate sn-glycerol 3-phosphate. K195 serves as the catalytic Proton acceptor. R259 provides a ligand contact to NADPH. NADPH is bound by residues V283 and E285.

Belongs to the NAD-dependent glycerol-3-phosphate dehydrogenase family.

Its subcellular location is the cytoplasm. The catalysed reaction is sn-glycerol 3-phosphate + NAD(+) = dihydroxyacetone phosphate + NADH + H(+). The enzyme catalyses sn-glycerol 3-phosphate + NADP(+) = dihydroxyacetone phosphate + NADPH + H(+). Its pathway is membrane lipid metabolism; glycerophospholipid metabolism. Catalyzes the reduction of the glycolytic intermediate dihydroxyacetone phosphate (DHAP) to sn-glycerol 3-phosphate (G3P), the key precursor for phospholipid synthesis. This chain is Glycerol-3-phosphate dehydrogenase [NAD(P)+], found in Klebsiella pneumoniae (strain 342).